Consider the following 253-residue polypeptide: uncharacterized protein (253 aa).

It belongs to the DcsA family.

This is an uncharacterized protein from Bacillus subtilis (strain 168).